Here is a 369-residue protein sequence, read N- to C-terminus: MNEVKHDIKALSLEALMALINSYGQPAFRAKQIFHWIYAHGVTDFAQMKNLSASFQTLLSQHFTVSSIQPHADTVSHEITPEQTVKFLFRLSDEQSIESVFIPSDSTSRNTLCISSQVGCAFACKFCATGYMGFIRNLTIGEILDQVLWVNRWLGDQRGGKITNVVFMGMGEPLANFDNCLAAIRILTNPDYAFQISTRKITVSTVGFIPGIQRLIDTGINCKLAISLHSAHQAIREELIPIAKEYSLATLKAILTRYNQAYKQPITFEYSLIHKINDSEQDAILLSKFCKGINCKINLIDYNSVDNIDYLPSPEGHKQAFIRKCIEHGLTVTVRKSRGADIQAACGQLAIQHVHGKKFSKIQTSRHST.

Glu-98 functions as the Proton acceptor in the catalytic mechanism. The Radical SAM core domain maps to 106-341 (STSRNTLCIS…VTVRKSRGAD (236 aa)). The cysteines at positions 113 and 346 are disulfide-linked. [4Fe-4S] cluster contacts are provided by Cys-120, Cys-124, and Cys-127. S-adenosyl-L-methionine contacts are provided by residues 171–172 (GE), Ser-204, 227–229 (SLH), and Asn-303. The S-methylcysteine intermediate role is filled by Cys-346.

It belongs to the radical SAM superfamily. RlmN family. It depends on [4Fe-4S] cluster as a cofactor.

It localises to the cytoplasm. The catalysed reaction is adenosine(2503) in 23S rRNA + 2 reduced [2Fe-2S]-[ferredoxin] + 2 S-adenosyl-L-methionine = 2-methyladenosine(2503) in 23S rRNA + 5'-deoxyadenosine + L-methionine + 2 oxidized [2Fe-2S]-[ferredoxin] + S-adenosyl-L-homocysteine. It catalyses the reaction adenosine(37) in tRNA + 2 reduced [2Fe-2S]-[ferredoxin] + 2 S-adenosyl-L-methionine = 2-methyladenosine(37) in tRNA + 5'-deoxyadenosine + L-methionine + 2 oxidized [2Fe-2S]-[ferredoxin] + S-adenosyl-L-homocysteine. In terms of biological role, specifically methylates position 2 of adenine 2503 in 23S rRNA and position 2 of adenine 37 in tRNAs. The protein is Probable dual-specificity RNA methyltransferase RlmN of Chloroherpeton thalassium (strain ATCC 35110 / GB-78).